A 239-amino-acid polypeptide reads, in one-letter code: 1-(5-phosphoribosyl)-5-[(5-phosphoribosylamino)methylideneamino] imidazole-4-carboxamide isomerase (239 aa).

The Proton acceptor role is filled by Asp-8. The Proton donor role is filled by Asp-129.

The protein belongs to the HisA/HisF family.

It localises to the cytoplasm. It catalyses the reaction 1-(5-phospho-beta-D-ribosyl)-5-[(5-phospho-beta-D-ribosylamino)methylideneamino]imidazole-4-carboxamide = 5-[(5-phospho-1-deoxy-D-ribulos-1-ylimino)methylamino]-1-(5-phospho-beta-D-ribosyl)imidazole-4-carboxamide. It functions in the pathway amino-acid biosynthesis; L-histidine biosynthesis; L-histidine from 5-phospho-alpha-D-ribose 1-diphosphate: step 4/9. This is 1-(5-phosphoribosyl)-5-[(5-phosphoribosylamino)methylideneamino] imidazole-4-carboxamide isomerase from Bacillus thuringiensis subsp. konkukian (strain 97-27).